A 580-amino-acid chain; its full sequence is Peptide transporter PTR_B (580 aa).

Residues 1 to 30 are compositionally biased toward basic and acidic residues; sequence MSTEKLQNDDKVVDEKYVDADEHSLVRSQD. The tract at residues 1-45 is disordered; that stretch reads MSTEKLQNDDKVVDEKYVDADEHSLVRSQDESFPQTEEGGEPTDH. Residues 57-78 traverse the membrane as a helical segment; sequence IPMSCWLVAIVELSERFTYYGL. N-linked (GlcNAc...) asparagine glycosylation occurs at Asn101. A run of 11 helical transmembrane segments spans residues 107 to 127, 134 to 154, 163 to 183, 219 to 239, 249 to 269, 326 to 346, 370 to 390, 402 to 422, 449 to 469, 484 to 504, and 513 to 533; these read ALSYFWQFWCYVTPIFGAWIA, YFTICIFCIVMMVGIFILFIT, TTSLAGFIVAVIVIGIGTGGI, VSNVFMFFYLMINIGALSVIA, FWAAFLLPLCFFCVGILALVL, ALYACKVFAFYPIYWLVYGQM, INSITLIIFIPICERIVYPFI, IFWGFMFGAAAMVYAGVLQHF, IALQTPCYWLIGMSEIFASIT, SFIMSIFLLMNAFGSALGIAL, and MVWTFNGLGVSCFIAGWIFWF.

The protein belongs to the major facilitator superfamily. Proton-dependent oligopeptide transporter (POT/PTR) (TC 2.A.17) family.

The protein localises to the cell membrane. It carries out the reaction a dipeptide(out) + H(+)(out) = a dipeptide(in) + H(+)(in). The catalysed reaction is an L-amino acid tripeptide(out) + H(+)(out) = an L-amino acid tripeptide(in) + H(+)(in). Its function is as follows. Peptide transporter that exploits the inwardly directed proton motive force to facilitate the cellular uptake of di/tripeptides. Shows strong uptake specificity towards the dipeptides Tyr-Phe and Gly-His, when compared to PTR_A and PTR_C. This Candidozyma auris (Yeast) protein is Peptide transporter PTR_B.